The chain runs to 72 residues: MKLCVTFLLILVILPSVTGEKSSKRTLSGAALRGDWGMCSGIGQGCGQDSNCCGDMCCYGQICAMTFAACGP.

The N-terminal stretch at 1-19 is a signal peptide; the sequence is MKLCVTFLLILVILPSVTG. A propeptide spanning residues 20–32 is cleaved from the precursor; that stretch reads EKSSKRTLSGAAL. 4 cysteine pairs are disulfide-bonded: Cys-39–Cys-53, Cys-46–Cys-58, Cys-52–Cys-63, and Cys-57–Cys-70.

The protein belongs to the conotoxin I1 superfamily. Expressed by the venom duct.

It is found in the secreted. In Conus episcopatus (Bishop's cone), this protein is Conotoxin Ep11.1.